Here is a 483-residue protein sequence, read N- to C-terminus: Transmembrane protein 39B (483 aa).

N-linked (GlcNAc...) asparagine glycosylation is present at Asn9. A run of 7 helical transmembrane segments spans residues 76–96, 114–134, 158–182, 187–207, 281–301, 414–434, and 440–460; these read HLLFELQLFFCHLIALFVHYI, TSLNFHLIDFNVLTLTTIVLA, LLVATRFAVLTGTGWSLCRSIILLF, FFNLLFLCYPFGMYIPFLQLG, EVLLSSMLSAYYVAFVPVWFV, VLNILTTLEGVLIFYQLYSLL, and HHTISLALILFSNYYAFFKLL.

The protein belongs to the TMEM39 family.

The protein localises to the endoplasmic reticulum membrane. May protect the cells against DNA damage caused by exposure to the cold-warming stress and facilitates tissue damage repair during the recovery phase. The protein is Transmembrane protein 39B of Xenopus tropicalis (Western clawed frog).